A 447-amino-acid polypeptide reads, in one-letter code: MKVTDKKIEGCQASITVEMDSTEVEEGLSKTYRRLVKKVEIPGFRKGKAPRDVFEKYVSREKMLDELVDDIVPEACQKAIQDEEIKPFATPKVAMVTTDPFVFSARIPLPPVVELGDYKTIRATKETVEIAEENIDTVVDQVLHQRATWETAERPVKMGDMLLMQVESTLNGEPYLNREDMQYSVREEAIYPAPGFGDCLVDMVAGEPKEFSIVFPEDHARAELAGKTAAFKVTVREIKEEKLPELNDAFAHELNPEFNTLSELRQRIRENMQDRQDDKAQAKFEDQIVEALIKMSKIDYPEVMVEAELDQIIEQQLQRLQSNVKSPEEFRAMLSQMTPEDMQQRYRPLAEQRVASSLVLGKLATTENLVPNDEEVDAEIEKLITDAGDKKEEEKALYNQSETRDRLIQLLTARKTMAFIDEIALQPALEAVEPKADEDEKTEEADK.

Positions 159-244 (GDMLLMQVES…VREIKEEKLP (86 aa)) constitute a PPIase FKBP-type domain.

This sequence belongs to the FKBP-type PPIase family. Tig subfamily.

The protein resides in the cytoplasm. It carries out the reaction [protein]-peptidylproline (omega=180) = [protein]-peptidylproline (omega=0). Involved in protein export. Acts as a chaperone by maintaining the newly synthesized protein in an open conformation. Functions as a peptidyl-prolyl cis-trans isomerase. The chain is Trigger factor from Dehalococcoides mccartyi (strain CBDB1).